The sequence spans 424 residues: Inhibin beta A chain (424 aa).

Residues 1-20 (MPLLWLRGFLLASCWIIVRS) form the signal peptide. The propeptide occupies 21-308 (SPTPGSEGHG…EDHPHRRRRR (288 aa)). N-linked (GlcNAc...) asparagine glycosylation occurs at N165. Basic and acidic residues predominate over residues 264–275 (EVDGDGKKKDGS). Residues 264–306 (EVDGDGKKKDGSDGGLEEEKEQSHRPFLMLQARQSEDHPHRRR) form a disordered region. Disulfide bonds link C312–C320, C319–C389, C348–C421, and C352–C423.

Belongs to the TGF-beta family. In terms of assembly, dimeric, linked by one or more disulfide bonds. Inhibin A is a dimer of alpha/INHA and beta-A/INHBA. Activin A is a homodimer of beta-A/INHBA. Activin AB is a dimer of beta-A/INHBA and beta-B/INHBB. Interacts with FST and FSTL3; these interactions prevent activin A interaction to its type II receptor. Activin A interacts with ACVR2A. Activin A interacts with BMPR2. Inhibin A interacts with ACVR1; this interaction creates a non-signaling complex (NSC) that inhibits ACVR1-mediated BMP signaling. Inhibin A interacts with ACVR2A. In terms of tissue distribution, uterus, ovary and liver.

The protein localises to the secreted. Inhibins/activins are involved in regulating a number of diverse functions such as hypothalamic and pituitary hormone secretion, gonadal hormone secretion, germ cell development and maturation, erythroid differentiation, insulin secretion, nerve cell survival, embryonic axial development or bone growth, depending on their subunit composition. In terms of biological role, activin A is a homodimer of INHBA that plays a role in several essential biological processes including embryonic development, stem cell maintenance and differentiation, haematopoiesis, cell proliferation and tissue fibrosis. Signals through type I (such as ACVR1B or ACVR1C) and type II receptors (such as ACVR2A, ACVR2B or BMPR2) which, upon ligand binding, phosphorylate SMAD2 and SMAD3 intracellular signaling mediators that form a complex with SMAD4, translocate to the nucleus and modulate gene expression. Can also activate alternative non-canonical intracellular signaling pathways including the p38 MAPK, extracellular signal-regulated kinases 1/2 (ERK1/2) and c-Jun N-terminal kinases (JNKs) to modulate cell migration and differentiation. Alternatively, promotes osteoblastic differentiation via ACVRL1-SMAD1/5/9 pathway. In addition, can engage the type I receptor ACVR1 to form an ACVR1-activin A-type II receptor non-signaling complex (NSC) that renders receptors unavailable for engagement with BMPs, hence resulting in an apparent inhibition of ACVR1-mediated BMP signaling. Functionally, inhibin A is a dimer of alpha/INHA and beta-A/INHBA that functions as a feedback regulator in the hypothalamic-pituitary-gonadal (HPG) axis. Inhibits the secretion of FSH from the anterior pituitary gland by acting on pituitary gonadotrope cells. Antagonizes activin A by binding to the proteoglycan, betaglycan, and forming a stable complex with and, thereby, sequestering type II activin receptors while excluding type I receptor. The polypeptide is Inhibin beta A chain (Inhba) (Mus musculus (Mouse)).